Here is a 933-residue protein sequence, read N- to C-terminus: uncharacterized protein (933 aa).

Residues 1 to 28 (MNGNLPHIQIQSPKNSLDHLNNGRQATH) are compositionally biased toward polar residues. Disordered stretches follow at residues 1 to 135 (MNGN…GESD), 173 to 194 (MDNE…NAAD), and 252 to 275 (ATDF…ADAQ). The span at 29–47 (NFEHGKPGDREEANGHADA) shows a compositional bias: basic and acidic residues. Over residues 49 to 59 (SSSGRSRYLSS) the composition is skewed to low complexity. Composition is skewed to polar residues over residues 87–101 (TLSF…SNTH) and 108–135 (NRSS…GESD). Residues 173–182 (MDNESSEEER) show a composition bias toward acidic residues. Polar residues predominate over residues 264–275 (EPSSSRHTADAQ). WD repeat units follow at residues 314-353 (SSNN…HARS), 385-423 (GHTA…CLCC), 425-465 (EHSD…VSFW), 467-506 (ELPE…FRTQ), 517-563 (AKGS…LELK), 568-607 (ANAQ…MHKT), 617-657 (ASVR…SVIS), and 665-710 (PSLR…AARK). A Phosphoserine modification is found at Ser-722. Positions 756-796 (NASQITNNENNGNDDIKKGDEPEEEHVGLRKNSTQEKNANL) are disordered. Over residues 757 to 768 (ASQITNNENNGN) the composition is skewed to polar residues. Residues 769-783 (DDIKKGDEPEEEHVG) are compositionally biased toward basic and acidic residues.

It localises to the endoplasmic reticulum. Its subcellular location is the nucleus. This is an uncharacterized protein from Schizosaccharomyces pombe (strain 972 / ATCC 24843) (Fission yeast).